Here is a 270-residue protein sequence, read N- to C-terminus: ATP synthase subunit a (270 aa).

5 helical membrane passes run 38–58, 98–118, 143–163, 208–228, and 239–259; these read VHIDSLFFSWFTGLIFLGIFY, IAPLALTIFCWVFLMNVMDLV, DVNITMAMALGVFALMIYYSI, LFGNMFAGEVVFILCAAMLPW, and AIFHILVITIQAFVFMMLTIV.

Belongs to the ATPase A chain family. F-type ATPases have 2 components, CF(1) - the catalytic core - and CF(0) - the membrane proton channel. CF(1) has five subunits: alpha(3), beta(3), gamma(1), delta(1), epsilon(1). CF(0) has three main subunits: a(1), b(2) and c(9-12). The alpha and beta chains form an alternating ring which encloses part of the gamma chain. CF(1) is attached to CF(0) by a central stalk formed by the gamma and epsilon chains, while a peripheral stalk is formed by the delta and b chains.

It localises to the cell inner membrane. Its function is as follows. Key component of the proton channel; it plays a direct role in the translocation of protons across the membrane. In Vibrio parahaemolyticus serotype O3:K6 (strain RIMD 2210633), this protein is ATP synthase subunit a.